Consider the following 333-residue polypeptide: uncharacterized protein (333 aa).

The signal sequence occupies residues 1–23 (MSRSFMIILTIMLIALSLGEVLA). Residues 232 to 252 (SFFLGVLVTLMILSPVIVYLW) form a helical membrane-spanning segment.

The protein resides in the membrane. This is an uncharacterized protein from Pyrococcus abyssi (strain GE5 / Orsay).